A 173-amino-acid polypeptide reads, in one-letter code: Alpha-crystallin A chain (173 aa).

M1 is modified (N-acetylmethionine). Residues 1 to 63 are required for complex formation with BFSP1 and BFSP2; that stretch reads MDIAIQHPWF…RTVLDSGISE (63 aa). Q6 carries the deamidated glutamine; partial modification. K11 is a glycosylation site (N-linked (Glc) (glycation) lysine). At S45 the chain carries Phosphoserine. Residue Q50 is modified to Deamidated glutamine; partial. One can recognise a sHSP domain in the interval 52-162; it reads LFRTVLDSGI…GHSERAIPVS (111 aa). K70 is modified (N6-acetyllysine). K78 is a glycosylation site (N-linked (Glc) (glycation) lysine). A Deamidated glutamine; partial modification is found at Q90. K99 carries the post-translational modification N6-acetyllysine. H100 contacts Zn(2+). N101 carries the deamidated asparagine; partial modification. Residues E102 and H107 each coordinate Zn(2+). S122 is subject to Phosphoserine. N123 is subject to Deamidated asparagine; partial. The segment at 144–173 is disordered; it reads PKIPSGVDAGHSERAIPVSREEKPSSAPSS. A compositionally biased stretch (basic and acidic residues) spans 153–167; that stretch reads GHSERAIPVSREEKP. Residue H154 participates in Zn(2+) binding. The important for oligomerization stretch occupies residues 157 to 163; the sequence is RAIPVSR. O-linked (GlcNAc) serine glycosylation is present at S162.

The protein belongs to the small heat shock protein (HSP20) family. As to quaternary structure, heteromer composed of three CRYAA and one CRYAB subunits. Inter-subunit bridging via zinc ions enhances stability, which is crucial as there is no protein turn over in the lens. Can also form homodimers and homotetramers (dimers of dimers) which serve as the building blocks of homooligomers. Within homooligomers, the zinc-binding motif is created from residues of 3 different molecules. His-100 and Glu-102 from one molecule are ligands of the zinc ion, and His-107 and His-154 residues from additional molecules complete the site with tetrahedral coordination geometry. Part of a complex required for lens intermediate filament formation composed of BFSP1, BFSP2 and CRYAA. Acetylation at Lys-70 may increase chaperone activity. In terms of processing, undergoes age-dependent proteolytical cleavage at the C-terminus.

It is found in the cytoplasm. Its subcellular location is the nucleus. Contributes to the transparency and refractive index of the lens. Acts as a chaperone, preventing aggregation of various proteins under a wide range of stress conditions. Required for the correct formation of lens intermediate filaments as part of a complex composed of BFSP1, BFSP2 and CRYAA. The polypeptide is Alpha-crystallin A chain (CRYAA) (Bos taurus (Bovine)).